The primary structure comprises 245 residues: UPF0246 protein Ldb2075 (245 aa).

It belongs to the UPF0246 family.

This is UPF0246 protein Ldb2075 from Lactobacillus delbrueckii subsp. bulgaricus (strain ATCC 11842 / DSM 20081 / BCRC 10696 / JCM 1002 / NBRC 13953 / NCIMB 11778 / NCTC 12712 / WDCM 00102 / Lb 14).